Here is a 100-residue protein sequence, read N- to C-terminus: A-type ATP synthase subunit F (100 aa).

The protein belongs to the V-ATPase F subunit family. Has multiple subunits with at least A(3), B(3), C, D, E, F, H, I and proteolipid K(x).

The protein localises to the cell membrane. Component of the A-type ATP synthase that produces ATP from ADP in the presence of a proton gradient across the membrane. The sequence is that of A-type ATP synthase subunit F from Methanocorpusculum labreanum (strain ATCC 43576 / DSM 4855 / Z).